The primary structure comprises 307 residues: DDRGK domain-containing protein 1 (307 aa).

Over 1-2 (MD) the chain is Lumenal. The helical transmembrane segment at 3–23 (LILLVGIAVALLVILATLYFL) threads the bilayer. The Cytoplasmic portion of the chain corresponds to 24-307 (QNKNKAAGEA…PVQSAAGGDS (284 aa)). Composition is skewed to low complexity over residues 32-43 (EAKPAAAAPRRG) and 54-83 (RRAQIARNQRNRLQQNAPAPAPEAVAPAAA). A disordered region spans residues 32–162 (EAKPAAAAPR…EEVEAEAERK (131 aa)). Residues 117–162 (KMEAKEQKRLQREHELQEREKRKVKEAKEDAERKQQEEVEAEAERK) show a composition bias toward basic and acidic residues.

Belongs to the DDRGK1 family. Interacts with Atg9; the interaction is transient.

The protein resides in the endoplasmic reticulum membrane. Its function is as follows. Substrate adapter for ufmylation, the covalent attachment of the ubiquitin-like modifier UFM1 to substrate proteins. Required for ufmylation of Atg9; protects the nervous system during aging, possibly by stabilizing Atg9 and supporting its function. The sequence is that of DDRGK domain-containing protein 1 from Drosophila willistoni (Fruit fly).